A 772-amino-acid polypeptide reads, in one-letter code: Probable adenosine deaminase (772 aa).

The Zn(2+) site is built by His22 and His24. Substrate is bound by residues His24, Asp26, and Gly180. His207 lines the Zn(2+) pocket. Glu210 functions as the Proton donor in the catalytic mechanism. A Zn(2+)-binding site is contributed by Asp288.

Belongs to the metallo-dependent hydrolases superfamily. Adenosine and AMP deaminases family. Requires Zn(2+) as cofactor.

The enzyme catalyses adenosine + H2O + H(+) = inosine + NH4(+). In terms of biological role, catalyzes the hydrolytic deamination of adenosine. Plays an important role in purine metabolism and in adenosine homeostasis, and may thereby contribute to cellular signaling events. The protein is Probable adenosine deaminase (ada) of Dictyostelium discoideum (Social amoeba).